Consider the following 416-residue polypeptide: E3 ubiquitin-protein ligase RNFT1 (416 aa).

A compositionally biased stretch (polar residues) spans Gln-27–Val-45. Disordered stretches follow at residues Gln-27–Pro-50 and Gly-63–Arg-116. Over residues Gly-77 to Arg-86 the composition is skewed to basic residues. The next 6 helical transmembrane spans lie at Leu-146–Tyr-166, Leu-184–Phe-204, Val-214–Ile-234, Phe-237–Val-257, Tyr-265–Phe-287, and Trp-302–Gly-322. Residues Cys-349–Gln-400 are required for ubiquitin ligase activity and for protection against ER stress-induced cell death. The RING-type zinc finger occupies Cys-356 to Arg-394.

The protein localises to the endoplasmic reticulum membrane. It carries out the reaction S-ubiquitinyl-[E2 ubiquitin-conjugating enzyme]-L-cysteine + [acceptor protein]-L-lysine = [E2 ubiquitin-conjugating enzyme]-L-cysteine + N(6)-ubiquitinyl-[acceptor protein]-L-lysine.. Its pathway is protein modification; protein ubiquitination. In terms of biological role, E3 ubiquitin-protein ligase that acts in the endoplasmic reticulum (ER)-associated degradation (ERAD) pathway, which targets misfolded proteins that accumulate in the endoplasmic reticulum (ER) for ubiquitination and subsequent proteasome-mediated degradation. Protects cells from ER stress-induced apoptosis. The protein is E3 ubiquitin-protein ligase RNFT1 (rnft1) of Xenopus tropicalis (Western clawed frog).